We begin with the raw amino-acid sequence, 122 residues long: Large ribosomal subunit protein uL14 (122 aa).

This sequence belongs to the universal ribosomal protein uL14 family. In terms of assembly, part of the 50S ribosomal subunit. Forms a cluster with proteins L3 and L19. In the 70S ribosome, L14 and L19 interact and together make contacts with the 16S rRNA in bridges B5 and B8.

In terms of biological role, binds to 23S rRNA. Forms part of two intersubunit bridges in the 70S ribosome. This Prosthecochloris aestuarii (strain DSM 271 / SK 413) protein is Large ribosomal subunit protein uL14.